Here is a 78-residue protein sequence, read N- to C-terminus: D-alanyl carrier protein (78 aa).

The region spanning 1 to 78 (MAFRENVLEI…MIITQLEALK (78 aa)) is the Carrier domain. Residue Ser-36 is modified to O-(pantetheine 4'-phosphoryl)serine.

It belongs to the DltC family. 4'-phosphopantetheine is transferred from CoA to a specific serine of apo-DCP.

It is found in the cytoplasm. It functions in the pathway cell wall biogenesis; lipoteichoic acid biosynthesis. Its function is as follows. Carrier protein involved in the D-alanylation of lipoteichoic acid (LTA). The loading of thioester-linked D-alanine onto DltC is catalyzed by D-alanine--D-alanyl carrier protein ligase DltA. The DltC-carried D-alanyl group is further transferred to cell membrane phosphatidylglycerol (PG) by forming an ester bond, probably catalyzed by DltD. D-alanylation of LTA plays an important role in modulating the properties of the cell wall in Gram-positive bacteria, influencing the net charge of the cell wall. The polypeptide is D-alanyl carrier protein (Listeria innocua serovar 6a (strain ATCC BAA-680 / CLIP 11262)).